The sequence spans 173 residues: Large ribosomal subunit protein uL16 (173 aa).

Belongs to the universal ribosomal protein uL16 family.

In Methanosphaerula palustris (strain ATCC BAA-1556 / DSM 19958 / E1-9c), this protein is Large ribosomal subunit protein uL16.